The following is a 97-amino-acid chain: Protein YukE (97 aa).

The stretch at 21–94 (VESQEVLNQV…ESTDQDIANQ (74 aa)) forms a coiled coil.

This sequence belongs to the WXG100 family. sagEsxA-like subfamily. Homodimer.

It is found in the secreted. In terms of biological role, required to deliver LXG toxins to target cells. The protein is Protein YukE (yukE) of Bacillus subtilis (strain 168).